Here is a 463-residue protein sequence, read N- to C-terminus: MFIDGKWINREDMDVINPYSLEVIKKIPALSREEAKEAIDTAEKYKEVMKNLPITKRYNILMNIAKQIKEKKEELAKILAIDAGKPIKQARVEVERSIGTFKLAAFYVKEHRDEVIPSDDRLIFTRREPVGIVGAITPFNFPLNLSAHKIAPAIATGNVIVHHPSSKAPLVCIELAKIIENALKKYNVPLGVYNLLTGAGEVVGDEIVVNEKVNMISFTGSSKVGELITKKAGFKKIALELGGVNPNIVLKDADLNKAVNALIKGSFIYAGQVCISVGMILVDESIADKFIEMFVNKAKVLNVGNPLDEKTDVGPLISVEHAEWVEKVVEKAIDEGGKLLLGGKRDKALFYPTILEVDRDNILCKTETFAPVIPIIRTNEEEMIDIANSTEYGLHSAIFTNDINKSLKFAENLEFGGVVINDSSLFRQDNMPFGGVKKSGLGREGVKYAMEEMSNIKTIIISK.

Residue glycine 220 to glycine 225 participates in NAD(+) binding. Active-site residues include glutamate 240 and cysteine 274.

The protein belongs to the aldehyde dehydrogenase family. In terms of assembly, homotetramer.

It carries out the reaction (S)-lactaldehyde + NAD(+) + H2O = (S)-lactate + NADH + 2 H(+). It functions in the pathway cofactor biosynthesis; coenzyme F420 biosynthesis. Functionally, involved in F420 biosynthesis through the oxidation of lactaldehyde to lactate. The substrate preference order is propionaldehyde &gt; DL-lactaldehyde, DL-glyceraldehyde &gt; crotonaldehyde &gt; glycolaldehyde &gt; acetaldehyde, acrolein &gt; formaldehyde. No activity was observed towards methylglyoxal or glyceraldehyde-3-phosphate. Has a preference for NAD over NADP. This chain is Lactaldehyde dehydrogenase, found in Methanocaldococcus jannaschii (strain ATCC 43067 / DSM 2661 / JAL-1 / JCM 10045 / NBRC 100440) (Methanococcus jannaschii).